The primary structure comprises 364 residues: Histidinol-phosphate aminotransferase (364 aa).

Residues 1-46 (MQPRDLSDHSPYVPGRGVEEVARDRGLDPDDLIKLSSNENPHGPSP) form a disordered region. Residues 17 to 33 (GVEEVARDRGLDPDDLI) are compositionally biased toward basic and acidic residues. An N6-(pyridoxal phosphate)lysine modification is found at Lys-222.

It belongs to the class-II pyridoxal-phosphate-dependent aminotransferase family. Histidinol-phosphate aminotransferase subfamily. Requires pyridoxal 5'-phosphate as cofactor.

It carries out the reaction L-histidinol phosphate + 2-oxoglutarate = 3-(imidazol-4-yl)-2-oxopropyl phosphate + L-glutamate. The protein operates within amino-acid biosynthesis; L-histidine biosynthesis; L-histidine from 5-phospho-alpha-D-ribose 1-diphosphate: step 7/9. This is Histidinol-phosphate aminotransferase from Halorubrum lacusprofundi (strain ATCC 49239 / DSM 5036 / JCM 8891 / ACAM 34).